Here is a 312-residue protein sequence, read N- to C-terminus: G-protein coupled receptor BILF1 (312 aa).

Topologically, residues 1–40 (MLSTMAPGSTVGTLVANMTSVNATEDACTKSYSAFLSGMT) are extracellular. Cystine bridges form between cysteine 28–cysteine 258 and cysteine 97–cysteine 174. A helical membrane pass occupies residues 41 to 61 (SLLLVLLILLTLAGILFIIFV). Residues 62–67 (RKLVHR) are Cytoplasmic-facing. A helical membrane pass occupies residues 68–88 (MDVWLIALLIELLLWVLGKMI). Residues 89–95 (QEFSSTG) lie on the Extracellular side of the membrane. Residues 96-116 (LCLLTQNMMFLGLMCSVWTHL) traverse the membrane as a helical segment. Topologically, residues 117-138 (GMALEKTLALFSRTPKRTSHRN) are cytoplasmic. The chain crosses the membrane as a helical span at residues 139-159 (VCLYLMGVFCLVLLLIIILLI). Residues 160 to 192 (TMGPDANLNRGPNMCREGPTKGMHTAVQGLKAG) are Extracellular-facing. The chain crosses the membrane as a helical span at residues 193-213 (CYLLAAVLIVLLTVIIIWKLL). The Cytoplasmic portion of the chain corresponds to 214–228 (RTKFGRKPRLICNVT). Residues 229–249 (FTGLICAFSWFMLSLPLLFLG) form a helical membrane-spanning segment. The Extracellular portion of the chain corresponds to 250-269 (EAGSLGFDCTESLVARYYPG). The helical transmembrane segment at 270–290 (PAACLALLLIILYAWSFSHFM) threads the bilayer. Topologically, residues 291 to 312 (DSLKNQVTVTARYFRRVPSQST) are cytoplasmic.

The protein belongs to the Epstein-Barr virus BILF1 protein family. Interacts with host CXCR4 to form higher-order heterooligomers. Interacts with host Gi heterotrimer.

The protein resides in the host cell membrane. The protein localises to the host mitochondrion outer membrane. In terms of biological role, constitutively active, ligand-independent G protein-coupled receptor that has immunoevasive and oncogenic activities. Couples with the host inhibitory G protein (Gi) in order to disrupt the host chemokine signaling. As a consequence of its constitutive activity, mediates host CXCR4 inhibition. Enhances degradation of host major histocompatibility complex class I antigens via lysosomes, thereby modulating the antigen presentation to cytotoxic T cells. Targets selectively HLA-A, HLA-Band HLA-E molecules. Targets also newly synthesized MHC-I/peptide complexes en route to the host cell surface. Inhibits the host EIF2AK2/PKR phosphorylation. Displays tranforming activity. Utilizes its C-terminal tail to trigger host MAVS UFMylation via PARK2, resulting in selective MAVS removal from mitochondrial membranes and routing to lysosomes to prevent viral activation of the NLRP3 inflammasome. In Homo sapiens (Human), this protein is G-protein coupled receptor BILF1.